The following is a 246-amino-acid chain: MSQIESPNPEPVFQLKGSMLAITVMELARSNLEALDRQLAAKVAQAPNFFSNTPLILALDKLAPNEGPVDLPGLVRICRQHGLRTLAIRANRIEDIAAAIAVDLPVLPPSGARERVIDPIEAEAPKKLPEKPPEPLIKPTRVITSPVRGGQQIYAQGGDLVVVAPVSPGAELLADGNIHVYGPMRGRALAGIKGDTKARIFCQQLSAELISIAGQYKVSEDLRRDPLWGSPVQVSLSGDVLNIIRL.

This sequence belongs to the MinC family. As to quaternary structure, interacts with MinD and FtsZ.

Functionally, cell division inhibitor that blocks the formation of polar Z ring septums. Rapidly oscillates between the poles of the cell to destabilize FtsZ filaments that have formed before they mature into polar Z rings. Prevents FtsZ polymerization. This chain is Probable septum site-determining protein MinC, found in Pseudomonas syringae pv. tomato (strain ATCC BAA-871 / DC3000).